Consider the following 438-residue polypeptide: Serine hydroxymethyltransferase (438 aa).

(6S)-5,6,7,8-tetrahydrofolate contacts are provided by residues leucine 133 and 137 to 139 (GHL). The residue at position 242 (lysine 242) is an N6-(pyridoxal phosphate)lysine.

The protein belongs to the SHMT family. Homodimer. The cofactor is pyridoxal 5'-phosphate.

It is found in the cytoplasm. It carries out the reaction (6R)-5,10-methylene-5,6,7,8-tetrahydrofolate + glycine + H2O = (6S)-5,6,7,8-tetrahydrofolate + L-serine. It participates in one-carbon metabolism; tetrahydrofolate interconversion. Its pathway is amino-acid biosynthesis; glycine biosynthesis; glycine from L-serine: step 1/1. In terms of biological role, catalyzes the reversible interconversion of serine and glycine with tetrahydrofolate (THF) serving as the one-carbon carrier. This reaction serves as the major source of one-carbon groups required for the biosynthesis of purines, thymidylate, methionine, and other important biomolecules. Also exhibits THF-independent aldolase activity toward beta-hydroxyamino acids, producing glycine and aldehydes, via a retro-aldol mechanism. This is Serine hydroxymethyltransferase from Brucella melitensis biotype 2 (strain ATCC 23457).